The following is a 452-amino-acid chain: 23S rRNA (uracil(1939)-C(5))-methyltransferase RlmD (452 aa).

The TRAM domain occupies 1–57 (METEVNVAEISALDYEGRGVTKVGGKTVFIKGALPSERVGFRIVRQKKQFDEAEAVA). The [4Fe-4S] cluster site is built by Cys-70, Cys-76, Cys-79, and Cys-157. Residues Gln-269, Phe-298, Asn-303, Glu-319, Asn-347, and Asp-368 each coordinate S-adenosyl-L-methionine. Residue Cys-395 is the Nucleophile of the active site.

This sequence belongs to the class I-like SAM-binding methyltransferase superfamily. RNA M5U methyltransferase family. RlmD subfamily.

The enzyme catalyses uridine(1939) in 23S rRNA + S-adenosyl-L-methionine = 5-methyluridine(1939) in 23S rRNA + S-adenosyl-L-homocysteine + H(+). Its function is as follows. Catalyzes the formation of 5-methyl-uridine at position 1939 (m5U1939) in 23S rRNA. This is 23S rRNA (uracil(1939)-C(5))-methyltransferase RlmD from Neisseria lactamica (strain 020-06).